Here is a 337-residue protein sequence, read N- to C-terminus: Cysteinyl leukotriene receptor 1 (337 aa).

At 1–28 the chain is on the extracellular side; that stretch reads MDETGNLTVSSATCHDTIDDFRNQVYST. A glycan (N-linked (GlcNAc...) asparagine) is linked at Asn6. A helical membrane pass occupies residues 29–49; the sequence is LYSMISVVGFFGNGFVLYVLI. The Cytoplasmic segment spans residues 50 to 57; sequence KTYHKKSA. A helical membrane pass occupies residues 58–78; the sequence is FQVYMINLAVADLLCVCTLPL. Over 79–106 the chain is Extracellular; sequence RVVYYVHKGIWLFGDFLCRLSTYALYVN. Residues Cys96 and Cys173 are joined by a disulfide bond. The helical transmembrane segment at 107–127 threads the bilayer; the sequence is LYCSIFFMTAMSFFRCIAIVF. Topologically, residues 128–141 are cytoplasmic; that stretch reads PVQNINLVTQKKAR. The chain crosses the membrane as a helical span at residues 142–162; that stretch reads FVCVGIWIFVILTSSPFLMAK. Residues 163–193 are Extracellular-facing; it reads PQKDEKNNTKCFEPPQDNQTKNHVLVLHYVS. Asn169 and Asn180 each carry an N-linked (GlcNAc...) asparagine glycan. A helical transmembrane segment spans residues 194–214; it reads LFVGFIIPFVIIIVCYTMIIL. Residues 215–230 lie on the Cytoplasmic side of the membrane; the sequence is TLLKKSMKKNLSSHKK. The helical transmembrane segment at 231 to 251 threads the bilayer; sequence AIGMIMVVTAAFLVSFMPYHI. Topologically, residues 252–276 are extracellular; that stretch reads QRTIHLHFLHNETKPCDSVLRMQKS. Residue Asn262 is glycosylated (N-linked (GlcNAc...) asparagine). Residues 277-297 traverse the membrane as a helical segment; the sequence is VVITLSLAASNCCFDPLLYFF. Residues 298 to 337 are Cytoplasmic-facing; the sequence is SGGNFRKRLSTFRKHSLSSVTYVPRKKASLPEKGEEICKV.

It belongs to the G-protein coupled receptor 1 family. In terms of tissue distribution, widely expressed, with highest levels in spleen and peripheral blood leukocytes. Lower expression in several tissues, such as lung (mostly in smooth muscle bundles and alveolar macrophages), placenta, small intestine, pancreas, colon and heart.

It localises to the cell membrane. Receptor for cysteinyl leukotrienes mediating bronchoconstriction of individuals with and without asthma. Stimulation by LTD4 results in the contraction and proliferation of smooth muscle, edema, eosinophil migration and damage to the mucus layer in the lung. This response is mediated via a G-protein that activates a phosphatidylinositol-calcium second messenger system. The rank order of affinities for the leukotrienes is LTD4 &gt;&gt; LTE4 = LTC4 &gt;&gt; LTB4. This chain is Cysteinyl leukotriene receptor 1 (CYSLTR1), found in Homo sapiens (Human).